We begin with the raw amino-acid sequence, 512 residues long: ATP synthase subunit alpha, chloroplastic (512 aa).

170-177 (GDRQTGKT) is an ATP binding site.

This sequence belongs to the ATPase alpha/beta chains family. In terms of assembly, F-type ATPases have 2 components, CF(1) - the catalytic core - and CF(0) - the membrane proton channel. CF(1) has five subunits: alpha(3), beta(3), gamma(1), delta(1), epsilon(1). CF(0) has four main subunits: a, b, b' and c.

The protein localises to the plastid. Its subcellular location is the chloroplast thylakoid membrane. It carries out the reaction ATP + H2O + 4 H(+)(in) = ADP + phosphate + 5 H(+)(out). Functionally, produces ATP from ADP in the presence of a proton gradient across the membrane. The alpha chain is a regulatory subunit. This chain is ATP synthase subunit alpha, chloroplastic, found in Staurastrum punctulatum (Green alga).